We begin with the raw amino-acid sequence, 263 residues long: Neurovirulence factor ICP34.5 (263 aa).

Residues 1-14 (MARRRRHRGPRRPR) show a composition bias toward basic residues. The segment at 1 to 16 (MARRRRHRGPRRPRPP) is required for nucleolar localization. Disordered stretches follow at residues 1–128 (MARR…PFRL) and 149–190 (RRAG…PATP). Polar residues predominate over residues 24-35 (TAQSQVTSTPNS). Residues 45–58 (AAPPPPPASGPPPS) show a composition bias toward pro residues. Over residues 73–83 (ASDDDDDDDWP) the composition is skewed to acidic residues. Pro residues-rich tracts occupy residues 84–93 (DSPPPEPAPE) and 119–128 (SHPPSRPFRL). A Nuclear export signal motif is present at residues 128–137 (LPPRLALRLR). 10 repeat units span residues 161–163 (ATP), 164–166 (ATP), 167–169 (ATP), 170–172 (ATP), 173–175 (ATP), 176–178 (ATP), 179–181 (ATP), 182–184 (ATP), 185–187 (ATP), and 188–190 (ATP). The 10 X 3 AA tandem repeats of A-T-P stretch occupies residues 161–190 (ATPATPATPATPATPATPATPATPATPATP). Positions 164 to 190 (ATPATPATPATPATPATPATPATPATP) are enriched in low complexity. An interaction with host PPP1CA region spans residues 190–203 (PARVRFSPHVRVRH). Residues 205-263 (VVWASAARLARRGSWARERADRARFRRRVAEAEAVIGPCLGPEARARALARGAGPANSV) form an important for interferon resistance region. The short motif at 215–233 (RRGSWARERADRARFRRRV) is the Bipartite nuclear localization signal element. The tract at residues 233 to 248 (VAEAEAVIGPCLGPEA) is interaction with host EIF2S1/EIF-2ALPHA.

This sequence belongs to the PPP1R15 family. Interacts with host PPP1CA; this interaction to forms a high-molecular-weight complex that dephosphorylates EIF2S1/eIF-2alpha. Interacts with host EIF2S1/eIF-2alpha; this interaction is crucial for the specific dephosphorylation of EIF2S1/eIF-2alpha by PPP1CA. Binds to proliferating cell nuclear antigen (PCNA), which may release host cells from growth arrest and facilitate viral replication. Interacts (via N-terminus) with host C1QBP; this interaction allows C1QBP to be recruited to the inner nuclear membrane by ICP34.5. Interacts with host PRKCA. Interacts with protein UL31. Interacts with host STING/TMEM173; this interaction inhibits the intracellular DNA sensing pathway. Interacts with host BECN1; this interaction modulates host autophagy.

It localises to the host cytoplasm. Its subcellular location is the host nucleus. The protein resides in the host nucleolus. The protein localises to the virion. Its function is as follows. Inhibits the establishment of the immune response and of the integrated stress response (ISR) in the infected cell. Plays essential roles in viral nuclear egress to mediate capsid transit across the nuclear membrane. Facilitates nuclear egress cooperatively with host C1QBP and protein kinase C/PKC to induce lamin A/C phosphorylation and subsequent reorganization. In turn, lamina disassembles and nuclear egress occurs. Recruits the serine/threonine protein phosphatase PPP1CA/PP1-alpha to dephosphorylate the translation initiation factor EIF2S1/eIF-2alpha, thereby couteracting the host shutoff of protein synthesis involving double-stranded RNA-dependent protein kinase EIF2AK2/PKR. In turn, controls host IRF3 activation and subsequently inhibits host interferon response. Controls the DNA sensing pathway by interacting with and inhibiting host STING/TMEM173. Also down-modulates the host MHC class II proteins cell surface expression. Acts as a neurovirulence factor that has a profound effect on the growth of the virus in central nervous system tissue, by interacting with host BECN1 and thereby antagonizing the host autophagy response. In Human herpesvirus 1 (strain F) (HHV-1), this protein is Neurovirulence factor ICP34.5 (RL1).